We begin with the raw amino-acid sequence, 102 residues long: Transcription factor UPBEAT1 (102 aa).

A bHLH domain is found at 32–82 (IRPRKSVEASRRPCRAIHRRVKTLKELVPNTKTSEGLDGLFRQTADYILAL).

In terms of assembly, homodimer. As to expression, expressed in the root vascular tissue and in root hairs and lateral root caps. Detected at the protein level in all cell files in the elongation zone.

The protein localises to the nucleus. Its function is as follows. Transcription factor that modulates the balance between cellular proliferation and differentiation in root growth. Does not act through cytokinin and auxin signaling, but by repressing peroxidase expression in the elongation zone. In Arabidopsis thaliana (Mouse-ear cress), this protein is Transcription factor UPBEAT1 (UPB1).